The sequence spans 391 residues: Xylose isomerase (391 aa).

Residues His-54 and Asp-57 contribute to the active site. Mg(2+) is bound by residues Glu-181, Glu-217, His-220, Asp-245, Asp-255, Asp-257, and Asp-287.

This sequence belongs to the xylose isomerase family. In terms of assembly, homotetramer. It depends on Mg(2+) as a cofactor.

It localises to the cytoplasm. The enzyme catalyses alpha-D-xylose = alpha-D-xylulofuranose. Functionally, involved in D-xylose catabolism. This Streptomyces albus G protein is Xylose isomerase (xylA).